Reading from the N-terminus, the 142-residue chain is Salivary protein 15a (142 aa).

Residues 1–20 form the signal peptide; the sequence is MKYLGLALISAVFLIGACQA. 3 cysteine pairs are disulfide-bonded: cysteine 27-cysteine 44, cysteine 40-cysteine 108, and cysteine 91-cysteine 117.

Belongs to the PBP/GOBP family. As to expression, female salivary gland (at protein level).

It is found in the secreted. Inhibits contact coagulation pathway activation in the host by sequestering anionic polymers, such as polyphosphate and dextran sulfate, and thus blocking interaction of protein components of the pathway with negatively charged surfaces. Inhibits dextran sulfate-mediated autoactivation of host coagulation factor XII (F12). Inhibits dextran sulfate-mediated autoactivation of host factor XI (F11). Inhibits polyphosphate-mediated activation of host F11 by thrombin (F2). May inhibit dextran sulfate-mediated bradykinin generation in host plasma. The polypeptide is Salivary protein 15a (Phlebotomus duboscqi (Sandfly)).